The primary structure comprises 472 residues: UDP-N-acetylmuramate--L-alanine ligase (472 aa).

Residue 122 to 128 (GTHGKTT) coordinates ATP.

The protein belongs to the MurCDEF family.

It localises to the cytoplasm. The enzyme catalyses UDP-N-acetyl-alpha-D-muramate + L-alanine + ATP = UDP-N-acetyl-alpha-D-muramoyl-L-alanine + ADP + phosphate + H(+). Its pathway is cell wall biogenesis; peptidoglycan biosynthesis. Cell wall formation. The sequence is that of UDP-N-acetylmuramate--L-alanine ligase from Thermobifida fusca (strain YX).